Consider the following 434-residue polypeptide: Ataxin-10 homolog (434 aa).

Belongs to the ataxin-10 family.

It is found in the cytoplasm. The protein localises to the nucleus. Functionally, may play a role in the regulation of cytokinesis. The protein is Ataxin-10 homolog (mug160) of Schizosaccharomyces pombe (strain 972 / ATCC 24843) (Fission yeast).